The following is a 317-amino-acid chain: DNA-directed RNA polymerase subunit alpha 2 (317 aa).

An alpha N-terminal domain (alpha-NTD) region spans residues 1–227; that stretch reads MALENLLHPT…NQLRNIVDIE (227 aa). Residues 241–317 form an alpha C-terminal domain (alpha-CTD) region; it reads INPILLKHVE…TLIENWPQDL (77 aa).

It belongs to the RNA polymerase alpha chain family. As to quaternary structure, homodimer. The RNAP catalytic core consists of 2 alpha, 1 beta, 1 beta' and 1 omega subunit. When a sigma factor is associated with the core the holoenzyme is formed, which can initiate transcription.

It catalyses the reaction RNA(n) + a ribonucleoside 5'-triphosphate = RNA(n+1) + diphosphate. Its function is as follows. DNA-dependent RNA polymerase catalyzes the transcription of DNA into RNA using the four ribonucleoside triphosphates as substrates. This is DNA-directed RNA polymerase subunit alpha 2 from Francisella tularensis subsp. holarctica (strain FTNF002-00 / FTA).